The sequence spans 85 residues: Major outer membrane protein 1 (85 aa).

A signal peptide spans 1–18 (MEAREVEEMRRSRLLTLG). The helical transmembrane segment at 22-42 (YTAVIALAALVLVMGALGLVL) threads the bilayer.

In terms of assembly, forms extremely stable complexes with apparent masses of 150, 50, 45 and 38 kDa. Found in a ring-shaped complex of 7 nm diameter with a 2 nm channel through the middle. Complete denaturation requires temperatures over 110 degrees Celsius.

Its subcellular location is the cell outer membrane. Functionally, the most abundant protein of the outer membrane, it forms a pore through it. This chain is Major outer membrane protein 1 (ihomp1), found in Ignicoccus hospitalis (strain KIN4/I / DSM 18386 / JCM 14125).